A 302-amino-acid chain; its full sequence is Orotidine 5'-phosphate decarboxylase (302 aa).

The active-site Proton donor is Lys-105.

The protein belongs to the OMP decarboxylase family. Type 2 subfamily.

It catalyses the reaction orotidine 5'-phosphate + H(+) = UMP + CO2. Its pathway is pyrimidine metabolism; UMP biosynthesis via de novo pathway; UMP from orotate: step 2/2. This chain is Orotidine 5'-phosphate decarboxylase, found in Rhodopirellula baltica (strain DSM 10527 / NCIMB 13988 / SH1).